The following is a 448-amino-acid chain: Glutamate--tRNA ligase 1 (448 aa).

A 'HIGH' region motif is present at residues 9-19; it reads PSPTGKLHIGN. The 'KMSKS' region signature appears at 240 to 244; it reads KISKR. Position 243 (K243) interacts with ATP.

The protein belongs to the class-I aminoacyl-tRNA synthetase family. Glutamate--tRNA ligase type 1 subfamily. As to quaternary structure, monomer.

The protein resides in the cytoplasm. It catalyses the reaction tRNA(Glu) + L-glutamate + ATP = L-glutamyl-tRNA(Glu) + AMP + diphosphate. Functionally, catalyzes the attachment of glutamate to tRNA(Glu) in a two-step reaction: glutamate is first activated by ATP to form Glu-AMP and then transferred to the acceptor end of tRNA(Glu). The protein is Glutamate--tRNA ligase 1 of Orientia tsutsugamushi (strain Ikeda) (Rickettsia tsutsugamushi).